The primary structure comprises 182 residues: Transcription termination/antitermination protein NusG (182 aa).

This sequence belongs to the NusG family.

In terms of biological role, participates in transcription elongation, termination and antitermination. The protein is Transcription termination/antitermination protein NusG of Chlamydia trachomatis serovar D (strain ATCC VR-885 / DSM 19411 / UW-3/Cx).